The chain runs to 931 residues: Histone-lysine N-methyltransferase EZ1 (931 aa).

The span at 1-30 shows a compositional bias: low complexity; the sequence is MEAEAAAAVVASSASASASAGRSRPSSSAA. 3 disordered regions span residues 1–37, 372–450, and 491–549; these read MEAE…SNSA, PTHS…ITNR, and RNGN…YDSS. The segment covering 375-385 has biased composition (polar residues); the sequence is SSDNVMNQPGS. Basic residues predominate over residues 386 to 398; sequence NRKKNGSSGRKTK. A compositionally biased stretch (polar residues) spans 423 to 433; sequence SNKSPQHSPSP. Over residues 500-509 the composition is skewed to low complexity; sequence SSQQSSPSTR. A compositionally biased stretch (basic and acidic residues) spans 528–549; it reads AHNDSTEEANNRHSATDGYDSS. One can recognise an SANT domain in the interval 565–615; it reads YLRSWKAIEQGLLVKGLEIFGRNSCLIARNLLGGMKTCKDVFQYMNYIENN. The CXC domain occupies 664–763; it reads FKRITERKDQ…TLGVPNQRGD (100 aa). Residues 778–893 enclose the SET domain; the sequence is QRVLLGRSDV…AGEELFYDYR (116 aa). Residues 903-915 are compositionally biased toward basic and acidic residues; the sequence is ARKPEASGAKDDG. Residues 903–931 form a disordered region; the sequence is ARKPEASGAKDDGQPFNGRAKKLAQNNRG.

It belongs to the class V-like SAM-binding methyltransferase superfamily. Histone-lysine methyltransferase family. EZ subfamily. In terms of tissue distribution, widely expressed.

The protein localises to the nucleus. The catalysed reaction is L-lysyl(27)-[histone H3] + 3 S-adenosyl-L-methionine = N(6),N(6),N(6)-trimethyl-L-lysyl(27)-[histone H3] + 3 S-adenosyl-L-homocysteine + 3 H(+). Polycomb group (PcG) protein. Catalytic subunit of some PcG multiprotein complex, which methylates 'Lys-27' of histone H3, leading to transcriptional repression of the affected target genes. PcG proteins are not required to initiate repression, but to maintain it during later stages of development. In Zea mays (Maize), this protein is Histone-lysine N-methyltransferase EZ1 (EZ1).